We begin with the raw amino-acid sequence, 303 residues long: ATP-dependent (S)-NAD(P)H-hydrate dehydratase (303 aa).

The YjeF C-terminal domain maps to 12 to 299 (QQQLVCSVIP…AEVRTAFSML (288 aa)). (6S)-NADPHX-binding positions include glycine 106 and 158 to 164 (NAVELDR). Residues 194–198 (KGSED) and 213–222 (GSPRRCGGQG) contribute to the ATP site. Aspartate 223 is a binding site for (6S)-NADPHX.

This sequence belongs to the NnrD/CARKD family. It depends on Mg(2+) as a cofactor.

It carries out the reaction (6S)-NADHX + ATP = ADP + phosphate + NADH + H(+). The enzyme catalyses (6S)-NADPHX + ATP = ADP + phosphate + NADPH + H(+). Catalyzes the dehydration of the S-form of NAD(P)HX at the expense of ATP, which is converted to ADP. Together with NAD(P)HX epimerase, which catalyzes the epimerization of the S- and R-forms, the enzyme allows the repair of both epimers of NAD(P)HX, a damaged form of NAD(P)H that is a result of enzymatic or heat-dependent hydration. This is ATP-dependent (S)-NAD(P)H-hydrate dehydratase from Ixodes scapularis (Black-legged tick).